Reading from the N-terminus, the 444-residue chain is Glutamate--tRNA ligase 2 (444 aa).

The 'HIGH' region motif lies at 7-17 (PSPTGYLHVGN). The 'KMSKS' region motif lies at 240–244 (KLSKR). Position 243 (K243) interacts with ATP.

This sequence belongs to the class-I aminoacyl-tRNA synthetase family. Glutamate--tRNA ligase type 1 subfamily. As to quaternary structure, monomer.

The protein localises to the cytoplasm. It catalyses the reaction tRNA(Glu) + L-glutamate + ATP = L-glutamyl-tRNA(Glu) + AMP + diphosphate. Functionally, catalyzes the attachment of glutamate to tRNA(Glu) in a two-step reaction: glutamate is first activated by ATP to form Glu-AMP and then transferred to the acceptor end of tRNA(Glu). The sequence is that of Glutamate--tRNA ligase 2 from Gluconobacter oxydans (strain 621H) (Gluconobacter suboxydans).